The sequence spans 591 residues: Serine/threonine-protein kinase Nek2 (591 aa).

A Protein kinase domain is found at 4–258; that stretch reads YEVLEQIGKG…AAQLLKHPQL (255 aa). ATP-binding positions include 10–18 and K33; that span reads IGKGAFGSA. The active-site Proton acceptor is the D129. 3 disordered regions span residues 309 to 331, 387 to 408, and 500 to 534; these read LGNE…SSTR, EPPK…TTPN, and RTDG…DTSS. Composition is skewed to polar residues over residues 391–408 and 504–534; these read TSYN…TTPN and DNGS…DTSS.

It belongs to the protein kinase superfamily. NEK Ser/Thr protein kinase family. NIMA subfamily.

It catalyses the reaction L-seryl-[protein] + ATP = O-phospho-L-seryl-[protein] + ADP + H(+). The catalysed reaction is L-threonyl-[protein] + ATP = O-phospho-L-threonyl-[protein] + ADP + H(+). In terms of biological role, may be involved in plant development processes. This Oryza sativa subsp. indica (Rice) protein is Serine/threonine-protein kinase Nek2 (NEK2).